The following is a 487-amino-acid chain: Protein DETOXIFICATION 10 (487 aa).

Helical transmembrane passes span 35–55 (LICFAAPMAAVVIIQFMIQII), 73–93 (FAVSFCNVTGFSFIIGLSCAL), 122–142 (LVCLPLSLLWFNMGKLIVILG), 155–175 (AAWLIPGLFAYAVLQPLIRYF), 184–204 (LLVTSSVVFCIHVPLCWLLVY), 211–231 (IGGALALSLSYWLYAIFLGSF), 264–284 (AAMLCLEWWSYELIILLSGLL), 293–313 (VLSICFETLSITYSIPLAIAA), 333–353 (IVVYAAMSLAVMDALMVSMSL), 377–397 (MAPLVSISIILDSLQGVLSGV), 412–432 (FGAFYLWGIPIAASLAFWVHL), and 435–455 (VGLWIGILAGAVLQTLLLALV).

The protein belongs to the multi antimicrobial extrusion (MATE) (TC 2.A.66.1) family.

The protein resides in the membrane. The polypeptide is Protein DETOXIFICATION 10 (Arabidopsis thaliana (Mouse-ear cress)).